Consider the following 1151-residue polypeptide: Protein kinase C-like 1 (1151 aa).

REM-1 domains lie at 1–67 (MSFS…KTAQ) and 106–183 (KYDC…INVD). The tract at residues 64 to 88 (KTAQQSQGENGSEDNERCNSKEYGF) is disordered. In terms of domain architecture, C2 spans 190–309 (QPNDIMDNQQ…IRKKKAGQTN (120 aa)). Ser226 is subject to Phosphoserine. Residues 306-331 (GQTNEQQGWVNASNINGGSSLASEEG) form a disordered region. Phorbol-ester/DAG-type zinc fingers lie at residues 414 to 461 (GHHF…VTKC) and 481 to 531 (PHRF…PDFC). Disordered stretches follow at residues 546 to 620 (QDTK…IIDK) and 649 to 669 (AQQT…SNRR). Residues 560–577 (PSAQLGSSIGTANGSDLS) are compositionally biased toward polar residues. The segment covering 605–620 (VGRDSPTKQHDPIIDK) has biased composition (basic and acidic residues). Ser761 bears the Phosphoserine mark. The interval 782–816 (LAPTSTHASRTTDQQSPQKSQTSTSAKHKKRAAKR) is disordered. The segment covering 792 to 806 (TTDQQSPQKSQTSTS) has biased composition (low complexity). The segment covering 807–816 (AKHKKRAAKR) has biased composition (basic residues). Residues 824–1083 (FVLLKVLGKG…ADEVMEEPFF (260 aa)) enclose the Protein kinase domain. ATP contacts are provided by residues 830-838 (LGKGNFGKV) and Lys853. Catalysis depends on Asp949, which acts as the Proton acceptor. Residues 1084 to 1151 (RNINFDDILN…FSFMPDDLDL (68 aa)) form the AGC-kinase C-terminal domain.

It belongs to the protein kinase superfamily. AGC Ser/Thr protein kinase family. PKC subfamily.

The enzyme catalyses L-seryl-[protein] + ATP = O-phospho-L-seryl-[protein] + ADP + H(+). It carries out the reaction L-threonyl-[protein] + ATP = O-phospho-L-threonyl-[protein] + ADP + H(+). Its function is as follows. Required for cell growth and for the G2-&gt;M transition of the cell division cycle. Mediates a protein kinase cascade; it activates BCK1 which itself activates MKK1/MKK2. This chain is Protein kinase C-like 1 (PKC1), found in Saccharomyces cerevisiae (strain ATCC 204508 / S288c) (Baker's yeast).